A 216-amino-acid polypeptide reads, in one-letter code: 7-carboxy-7-deazaguanine synthase (216 aa).

Substrate contacts are provided by residues Leu12–Gly14 and Arg27. Positions Arg18 to Pro216 constitute a Radical SAM core domain. 3 residues coordinate [4Fe-4S] cluster: Cys31, Cys46, and Cys49. Thr51 lines the Mg(2+) pocket. Thr93 is a substrate binding site. S-adenosyl-L-methionine is bound by residues Gly95, Ser136–Lys138, and Gln176–Asp179. Pro216 is a substrate binding site.

It belongs to the radical SAM superfamily. 7-carboxy-7-deazaguanine synthase family. In terms of assembly, homodimer. Requires [4Fe-4S] cluster as cofactor. It depends on S-adenosyl-L-methionine as a cofactor. Mg(2+) is required as a cofactor.

It catalyses the reaction 6-carboxy-5,6,7,8-tetrahydropterin + H(+) = 7-carboxy-7-deazaguanine + NH4(+). It participates in purine metabolism; 7-cyano-7-deazaguanine biosynthesis. Catalyzes the complex heterocyclic radical-mediated conversion of 6-carboxy-5,6,7,8-tetrahydropterin (CPH4) to 7-carboxy-7-deazaguanine (CDG), a step common to the biosynthetic pathways of all 7-deazapurine-containing compounds. This chain is 7-carboxy-7-deazaguanine synthase, found in Nitratidesulfovibrio vulgaris (strain ATCC 29579 / DSM 644 / CCUG 34227 / NCIMB 8303 / VKM B-1760 / Hildenborough) (Desulfovibrio vulgaris).